Consider the following 281-residue polypeptide: Pantothenate synthetase (281 aa).

ATP is bound at residue 26 to 33 (MGNLHDGH). H33 (proton donor) is an active-site residue. Q57 is a (R)-pantoate binding site. Q57 provides a ligand contact to beta-alanine. 145–148 (GEKD) is an ATP binding site. Q151 serves as a coordination point for (R)-pantoate. Residue 182-185 (MSSR) coordinates ATP.

The protein belongs to the pantothenate synthetase family. In terms of assembly, homodimer.

It localises to the cytoplasm. The catalysed reaction is (R)-pantoate + beta-alanine + ATP = (R)-pantothenate + AMP + diphosphate + H(+). Its pathway is cofactor biosynthesis; (R)-pantothenate biosynthesis; (R)-pantothenate from (R)-pantoate and beta-alanine: step 1/1. Functionally, catalyzes the condensation of pantoate with beta-alanine in an ATP-dependent reaction via a pantoyl-adenylate intermediate. This Idiomarina loihiensis (strain ATCC BAA-735 / DSM 15497 / L2-TR) protein is Pantothenate synthetase.